The primary structure comprises 2422 residues: MGSLQDAHPHRVSVLFGPKCPKTDRSVLHIRRYLSSHRNTGWLEDAVQALPSVWHDVTKVWPAAEKIPGFCVGYLAAVAACWETDQTEFPKAVATMLRIAVCIGAVVDLDELEKQRATSMAVRWKTSADYKLLTALLSRYPGAYIACVTDESAATVTIWESQAAALVKELESNGLVVKSTQLRGRFHHSDHTSVVQEFLKLCQEDNRFHLPNGNPAVGLPRSNIDGEVPTLQSLLSVANESILISQANWNLTVSATISSLQLTDAKSIVSIGAGQCIPRKARGRILHTVEPPDSHHNTNTTQDSDVTTNASPLTAGYVNGTGPAATATTVPIAVTGMACRYPQADSMEELWKILEQGHCTVSPMPKNRFKLDELQREPKGPFWGNFLSRPDTFDHRFFKISAREAESMDPQQRLLLQVAYEAIESAGYCGLRASQLPQDVGCYVGVGTEDYSENVASRNATAFSATGTLQAFNSGRVSHYFGWTGPSVTIDTACSSAAVAIHLACQALQTNDCSMAVAGGVNVMTDPRWSQNLAAASFLSPTGASKAFDADANGYCRGEGAGLVVLRPLEAALRDGDPIHAVITGTSVNQGANCSPITVPDSNSQTTLYLKALSISGIKPDVVTYVEAHGTGTQVGDPIEFQSIRKTFAVPHRTERLYVGSIKDNIGHTETSSGVAGMLKTILMLQKRRIPKQANFTRLNPMITLQKEDQIFIPVESTDWKAEKRVAMVTNYGAAGSNAAIVLQEPTCTSRTPISGYREYLPSVIPVFVAARTEESIREYCKALQTAFLEAPQVNNVEVQDIAFNLARKQNRDMEYSVAFTTASGNDAELRERLEDIVSGRTRIEKKCQAAHPVVLCFGGQTGNTASISQNLVQSSELLRFHLYATAKAWLDSGLRVDRMIGHSFGQLTAVCVAGGLSLLDAMRLISSRAQLIRSEWKSDTGLMLSVRGEKETVQALLDAVSNAADIACVNGPESFVVAGDEATIHKMENIAVERGMKLRMQRLKNTHAFHSKLVDSILPGLTKIASTLNYRPLRIPVEPCSELADDWSLPTGDKIVQHSRKAVYFHNAIRRTISHMDSPCIWLEAGSASPIIRMVRRAVDASPSPRDHVYCPIDLSGPQAEENFAKVFSSLWSKGVQVQFWPFHGSQTGYRWINLPPYQFAKTSHWIDYDPNAFYSDPPKREAGRTDEPSLVKLLNNDGNVYLFGVNVNDPLFRMCTAGHAVVDQNLCPASLYFELVVRGAVAVLPLENDPTMYHIAGLDISAPLVLDMPGSVFLELTQRGSGPGQFTFVLFTRDGNQDSVAHATGKISISSEANDSGISSRFGSLRRLVNPSRWGFIATSPSSSGLKRSTVYQAFRRVVNYADYYRGVEEVYAVGHEATGRVLLPSSPTNKASCDPILIDNFIQVAGIHVNCLSETLDEEVFVCSSVGDVIIGELFVRRDPGVSVPWIVYSSSERESMKKSLCDIFVVDEATGSLALCILSATFTCVSIQSLKRTLTRLNNKALASTGVDVVVPAVAVAPAAPAASAAMPDSSRSEDGLRVVQAMLSELLGISAGEIPASAALGDVGVDSLMSTEVLSEINKRFKVVITNSELTAIADVSGLVQRIFPGGSVAHVETHSQPPDKIGITTGDRMPPPRVPPPTVIQEQSLPGFVDKARELFAASRTSNEYRQKTRFLGFCDSVFPQQMELVTVYVVAALKALNVDLQSLRFGQAVPSVEVLPQHGKVMNQLFAVLEYSGLVERRGTGMIRGHRAVNKSTATILHKKILSEHPQHASEHKLLHTTGSRLADCLIGAADPLSLLFQDAQARALMQDVYSNAPMFKSATMHLAQFLKDLLGQRCFQRRISILEIGAGTGGTTDYILKQLSSVAGLTFEYTFTDISSSLVTLARKRFKTYHFMHYATLDIEQDPAPELQGQYDIIISSNCIHATRSLATSCSNIQKLLRPQGILCLIELTRNLFWFDLVFGLLEGWWLFNDGRSHALAHERLWDQTLRQAGFNWVDWTDNDSEESKILRMIVASPSQPVLCSPGEAKSNAVAEETLVYSRKDGLELCADIYYPHGLDGEDRKRPVAILIHGGGHIMLSRKDVRPMQVKMLLDMGFLPVSIDYRLCPEVPLLEGPMVDACDALAWARHELPQLQLKRPDIRPDGGNVVAVGWSSGGHLAMTLAWTAPARSVRAPEAILSFYSPTDYTDPFWTKPNFPYQESVCMSDVPTSDPLLALHDTAITSYNPAPGKGVLGGWMSPSDPRSRIALHMNWTGQTLPVLFYGCKYKSLAAAAKGDEVLLPAPHMSEVEKACPLSQVRAGRYKTPTFLIHGTLDDLIPVQQAQRIHQQMLVCGVESVLRIVSDGLHLFDIIPHLKENKDASQAVLDGLAPHIPTDEYPNPPPKLPKMDTSYPKCLYLISGVPVKALEIMSCYVFHR.

The segment at 14–196 (VLFGPKCPKT…HHSDHTSVVQ (183 aa)) is N-terminal acylcarrier protein transacylase domain (SAT). A disordered region spans residues 289–314 (VEPPDSHHNTNTTQDSDVTTNASPLT). Polar residues predominate over residues 297–312 (NTNTTQDSDVTTNASP). The Ketosynthase family 3 (KS3) domain maps to 329–745 (TVPIAVTGMA…GSNAAIVLQE (417 aa)). Catalysis depends on for beta-ketoacyl synthase activity residues Cys-494, His-629, and His-668. The interval 856-1121 (LCFGGQTGNT…CPIDLSGPQA (266 aa)) is malonyl-CoA:ACP transacylase (MAT) domain. The active-site For acyl/malonyl transferase activity is the Ser-904. The segment at 1190–1316 (PSLVKLLNND…GKISISSEAN (127 aa)) is N-terminal hotdog fold. Positions 1190–1495 (PSLVKLLNND…FTCVSIQSLK (306 aa)) constitute a PKS/mFAS DH domain. The product template (PT) domain stretch occupies residues 1191–1494 (SLVKLLNNDG…TFTCVSIQSL (304 aa)). The Proton acceptor; for dehydratase activity role is filled by His-1221. The interval 1345–1495 (SSGLKRSTVY…FTCVSIQSLK (151 aa)) is C-terminal hotdog fold. Residue Asp-1402 is the Proton donor; for dehydratase activity of the active site. Positions 1535–1612 (SRSEDGLRVV…GLVQRIFPGG (78 aa)) constitute a Carrier domain. Residue Ser-1572 is modified to O-(pantetheine 4'-phosphoryl)serine. Residues 1615-1636 (AHVETHSQPPDKIGITTGDRMP) form a disordered region. The methyltransferase (CMeT) domain stretch occupies residues 1774-2007 (QHASEHKLLH…GFNWVDWTDN (234 aa)). The thioesterase (TE) domain stretch occupies residues 2036-2383 (NAVAEETLVY…LAPHIPTDEY (348 aa)). Catalysis depends on for thioesterase activity residues Ser-2159, Asp-2320, and His-2352.

The catalysed reaction is 3 malonyl-CoA + acetyl-CoA + 2 S-adenosyl-L-methionine = 3,5-dimethylorsellinate + 2 S-adenosyl-L-homocysteine + 3 CO2 + 4 CoA. It participates in secondary metabolite biosynthesis; terpenoid biosynthesis. Non-reducing polyketide synthase; part of the gene cluster that mediates the biosynthesis of terretonin, a fungal meroterpenoid that acts as a mycotoxin. The first step of the pathway is the synthesis of 3,5-dimethylorsellinic acid (DMOA) by the polyketide synthase trt4. DMOA is then prenylated into farnesyl-DMOA by the polyprenyl transferase trt2. Methylation by the methyltransferase trt5 then leads to farnesyl-DMOA methyl ester which is further subject to epoxidation by the FAD-dependent monooxygenase trt8 to yield epoxyfarnesyl-DMOA methyl ester. Cyclization of epoxyfarnesyl-DMOA methyl ester by the terpene cyclase trt1 leads to a tetracycle intermediate which is in turn converted to preterretonin. Dehydrogenase trt9 comes next to transform preterretonin to preterrenoid. The FAD-dependent monooxygenase trt3 is then required for the C-hydroxylation at C16 of preterrenoid to yield terrenoid. The cytochrome P450 trt6 catalyzes three successive oxidations to transform terrenoid into an unstable intermediate, which then undergoes the D-ring expansion and unusual rearrangement of the methoxy group to afford the core skeleton of terretonin. Trt14 catalyzes the D-ring expansion of terretonin involving intramolecular methoxy rearrangement as well as the hydrolysis of the expanded D-ring and the methyl ester moiety. Finally, the nonheme iron-dependent dioxygenase trt7 accomplishes the last two oxidation reactions steps to complete the biosynthesis of terretonin. Terretonin C is produced via spontaneous decarboxylation of the terretonin precursor. Another shunt product of the terretonin biosynthesis is dihydrofarnesyl-DMOA, derived from epoxyfarnesyl-DMOA through hydrolysis of the epoxide. This Aspergillus terreus (strain NIH 2624 / FGSC A1156) protein is Non-reducing polyketide synthase trt4.